A 403-amino-acid chain; its full sequence is Acetate kinase (403 aa).

Residue Asn8 participates in Mg(2+) binding. Lys15 is a binding site for ATP. Arg90 contributes to the substrate binding site. Asp147 (proton donor/acceptor) is an active-site residue. Residues His207–Gly211, Asp282–Arg284, and Gly330–Asn334 contribute to the ATP site. Glu384 is a binding site for Mg(2+).

It belongs to the acetokinase family. As to quaternary structure, homodimer. The cofactor is Mg(2+). Mn(2+) is required as a cofactor.

The protein localises to the cytoplasm. The enzyme catalyses acetate + ATP = acetyl phosphate + ADP. Its pathway is metabolic intermediate biosynthesis; acetyl-CoA biosynthesis; acetyl-CoA from acetate: step 1/2. Functionally, catalyzes the formation of acetyl phosphate from acetate and ATP. Can also catalyze the reverse reaction. This Exiguobacterium sibiricum (strain DSM 17290 / CCUG 55495 / CIP 109462 / JCM 13490 / 255-15) protein is Acetate kinase.